A 106-amino-acid chain; its full sequence is Small ribosomal subunit protein uS10 (106 aa).

This sequence belongs to the universal ribosomal protein uS10 family. As to quaternary structure, part of the 30S ribosomal subunit.

In terms of biological role, involved in the binding of tRNA to the ribosomes. This is Small ribosomal subunit protein uS10 from Pyrobaculum aerophilum (strain ATCC 51768 / DSM 7523 / JCM 9630 / CIP 104966 / NBRC 100827 / IM2).